The following is a 3341-amino-acid chain: Genome polyprotein (3341 aa).

Composition is skewed to basic and acidic residues over residues 1 to 14 (MKRKDLEARGKAPG) and 24 to 35 (REGRRKDKDKGG). Positions 1 to 57 (MKRKDLEARGKAPGRDSSTPFWGREGRRKDKDKGGESPSNRQVTLKTPIQSGRRAGK) are disordered. At 1–120 (MKRKDLEARG…LESRRTTGNP (120 aa)) the chain is on the cytoplasmic side. Residues 37 to 50 (SPSNRQVTLKTPIQ) show a composition bias toward polar residues. Positions 55-97 (AGKRQRVGLLGRLGVGWGSFLQEDIVQALIHMALVLHALFASI) are hydrophobic; homodimerization of capsid protein C. Residues 117-136 (TGNPMTLAFILGFLTVLCGC) constitute a propeptide, ER anchor for the capsid protein C, removed in mature form by serine protease NS3. Residues 121–141 (MTLAFILGFLTVLCGCVVIDM) form a helical membrane-spanning segment. The Extracellular portion of the chain corresponds to 142–245 (QVSTTRGTEI…AFKTIRENKT (104 aa)). N-linked (GlcNAc...) asparagine; by host glycosylation is found at asparagine 157 and asparagine 243. A helical transmembrane segment spans residues 246-262 (IFIVALLCVAIAKRWPT). Tryptophan 263 is a topological domain (cytoplasmic). A helical transmembrane segment spans residues 264-278 (VVILLAIGTWTTVKG). Topologically, residues 279–665 (EFVEPLYTLK…GVWQDLVGKF (387 aa)) are extracellular. Asparagine 339 carries an N-linked (GlcNAc...) asparagine; by host glycan. Residues 371–384 (NRGWGTGCFKWGIG) are involved in fusion. 4 N-linked (GlcNAc...) asparagine; by host glycosylation sites follow: asparagine 399, asparagine 411, asparagine 575, and asparagine 611. The helical transmembrane segment at 666–686 (SVGAFFSNTALLVILVLAALI) threads the bilayer. Topologically, residues 687–689 (DKR) are cytoplasmic. A helical membrane pass occupies residues 690–705 (IAFLLVLGGYFYYVRA). The Extracellular portion of the chain corresponds to 706–1138 (DLGCGIDTTR…AKTRTSTLTR (433 aa)). N-linked (GlcNAc...) asparagine; by host glycosylation is found at asparagine 794, asparagine 896, asparagine 993, and asparagine 1027. Residues 1139–1159 (LFLTILAMALFGLPNLFSSVG) form a helical membrane-spanning segment. Topologically, residues 1160–1178 (LSAWVLLVASSSAQPQDLS) are cytoplasmic. A helical membrane pass occupies residues 1179–1199 (MNLWIVLQTGSSAVLLLGYMI). The Lumenal segment spans residues 1200-1204 (RRKLA). Residues 1205–1225 (MVLGVHHLVTLMCVQFLFSAV) form a helical membrane-spanning segment. The Cytoplasmic portion of the chain corresponds to 1226–1231 (DRYQKY). Residues 1232-1252 (LYGLLELMASVVLLSAYKSVL) form a helical membrane-spanning segment. Over 1253 to 1261 (QALPPEVLC) the chain is Lumenal. Residues 1262–1282 (FSLVMGWKTALSLATVVFLIF) form a helical membrane-spanning segment. The Cytoplasmic portion of the chain corresponds to 1283 to 1303 (SLNAMYKYACQYHNPRNGYRD). Residues 1304–1324 (SGANLWFWTVSLASAGGIWAA) traverse the membrane as a helical segment. At 1325-1326 (EK) the chain is on the lumenal side. The chain crosses the membrane as a helical span at residues 1327–1347 (AHQPTVAAVLAFTMVVLFLYM). Topologically, residues 1348–1403 (EQTNVSMELEFISAGETPEGVSTENDDGINIPDLKGRYGEDGIVVGAASSSGYLPE) are cytoplasmic. Residues 1404–1424 (LVFVFLLGFAVTSTSYFLGAL) constitute an intramembrane region (helical). Over 1425 to 2089 (YLLIATSTNL…TERSLTVVMA (665 aa)) the chain is Cytoplasmic. One can recognise a Peptidase S7 domain in the interval 1452–1630 (SDDLLGLGGP…KPTDVTESLN (179 aa)). Catalysis depends on charge relay system; for serine protease NS3 activity residues histidine 1506, aspartate 1530, and serine 1589. The 154-residue stretch at 1627–1780 (ESLNCDSTRR…SNYAISDQSI (154 aa)) folds into the Helicase ATP-binding domain. 1640-1647 (WHPGKGKT) serves as a coordination point for ATP. Positions 1729–1732 (DECH) match the DECH box motif. A Helicase C-terminal domain is found at 1793–1947 (NVQKSVGAKK…TFMLEEAAYS (155 aa)). The helical transmembrane segment at 2090–2110 (FVLGVSIMLSCFIAVWALCFL) threads the bilayer. Residues 2111-2145 (FSLFRPKKATYEQMPSSDPLSGGVLVSTPSVLYCM) lie on the Lumenal side of the membrane. Residues 2146–2166 (GVPLGFCVVITLAMFLVYPVL) form a helical membrane-spanning segment. Residues 2167–2178 (YKSIGNRSYMDS) are Cytoplasmic-facing. Residues 2179–2199 (DLVKWVILGSCLICGVLAWEM) form a helical membrane-spanning segment. Residues 2200 to 2242 (RMFPNIRSDLMELVKAVKEPEEVVNSGPSFPSWEIAQGKGATM) lie on the Lumenal side of the membrane. Residues 2243-2263 (LDSLQVFFFITVLSTKFLYWF) form a helical membrane-spanning segment. The Cytoplasmic segment spans residues 2264–2302 (QENWTARMYAMKHPEMVSSIGGFRFDEIPFRAVLPSGFA). Residues 2303–2323 (IVAIASLPSVVVGLLAAGVFM) constitute an intramembrane region (helical). Residues 2324–2366 (AIMYCQNKWNATPKILTALDARDQRHDRPTEITSRVPLENTRS) are Cytoplasmic-facing. The helical transmembrane segment at 2367 to 2387 (IMYAFCLIFSLFWAFCTRSPG) threads the bilayer. Topologically, residues 2388-2412 (DFLRGSLVVGASMWQILHPRSKIHD) are lumenal. The chain crosses the membrane as a helical span at residues 2413–2433 (VMDFGSMVSAIGLLEMNYLFY). The Cytoplasmic segment spans residues 2434 to 3341 (RFMHIAARAL…SRYRRGNDVI (908 aa)). Positions 2454–2706 (ALEKSTTIGL…SPVLPKGTRA (253 aa)) constitute an mRNA cap 0-1 NS5-type MT domain. Serine 2497 is an S-adenosyl-L-methionine binding site. Lysine 2509 functions as the For 2'-O-MTase activity in the catalytic mechanism. Glycine 2527, tryptophan 2528, threonine 2545, isoleucine 2546, aspartate 2572, and valine 2573 together coordinate S-adenosyl-L-methionine. Aspartate 2587 functions as the For 2'-O-MTase activity in the catalytic mechanism. Residue isoleucine 2588 coordinates S-adenosyl-L-methionine. Active-site for 2'-O-MTase activity residues include lysine 2624 and glutamate 2660. Position 2662 (tyrosine 2662) interacts with S-adenosyl-L-methionine. Zn(2+)-binding residues include glutamate 2881, histidine 2885, cysteine 2890, and cysteine 2893. Positions 2970–3117 (KYLIADDIAG…STDNRDFSSA (148 aa)) constitute a RdRp catalytic domain. Residues histidine 3152, cysteine 3168, and cysteine 3287 each contribute to the Zn(2+) site.

In the N-terminal section; belongs to the class I-like SAM-binding methyltransferase superfamily. mRNA cap 0-1 NS5-type methyltransferase family. Homodimer. In terms of assembly, forms heterodimers with envelope protein E in the endoplasmic reticulum and Golgi. As to quaternary structure, homodimer; in the endoplasmic reticulum and Golgi. Forms homodimers as well as homohexamers. NS1 may interact with NS4A. In terms of assembly, forms a heterodimer with serine protease NS3. May form homooligomers. As to quaternary structure, forms a heterodimer with NS2B. Interacts with NS4B. Interacts with unphosphorylated RNA-directed RNA polymerase NS5; this interaction stimulates RNA-directed RNA polymerase NS5 guanylyltransferase activity. Interacts with serine protease NS3. In terms of assembly, interacts with host STAT2; this interaction inhibits the phosphorylation of the latter, and, when all viral proteins are present (polyprotein), targets STAT2 for degradation. Genome polyprotein: Specific enzymatic cleavages in vivo yield mature proteins. Cleavages in the lumen of endoplasmic reticulum are performed by host signal peptidase, whereas cleavages in the cytoplasmic side are performed by serine protease NS3. Signal cleavage at the 2K-4B site requires a prior NS3 protease-mediated cleavage at the 4A-2K site. In terms of processing, cleaved in post-Golgi vesicles by a host furin, releasing the mature small envelope protein M, and peptide pr. This cleavage is incomplete as up to 30% of viral particles still carry uncleaved prM. Post-translationally, N-glycosylated. N-glycosylated. The excreted form is glycosylated and this is required for efficient secretion of the protein from infected cells. In terms of processing, phosphorylated on serines residues. This phosphorylation may trigger NS5 nuclear localization.

The protein localises to the virion. The protein resides in the host nucleus. It localises to the secreted. It is found in the virion membrane. Its subcellular location is the host endoplasmic reticulum membrane. It carries out the reaction Selective hydrolysis of -Xaa-Xaa-|-Yaa- bonds in which each of the Xaa can be either Arg or Lys and Yaa can be either Ser or Ala.. It catalyses the reaction RNA(n) + a ribonucleoside 5'-triphosphate = RNA(n+1) + diphosphate. The catalysed reaction is a ribonucleoside 5'-triphosphate + H2O = a ribonucleoside 5'-diphosphate + phosphate + H(+). The enzyme catalyses ATP + H2O = ADP + phosphate + H(+). It carries out the reaction a 5'-end (5'-triphosphoguanosine)-ribonucleoside in mRNA + S-adenosyl-L-methionine = a 5'-end (N(7)-methyl 5'-triphosphoguanosine)-ribonucleoside in mRNA + S-adenosyl-L-homocysteine. It catalyses the reaction a 5'-end (N(7)-methyl 5'-triphosphoguanosine)-ribonucleoside in mRNA + S-adenosyl-L-methionine = a 5'-end (N(7)-methyl 5'-triphosphoguanosine)-(2'-O-methyl-ribonucleoside) in mRNA + S-adenosyl-L-homocysteine + H(+). Plays a role in virus budding by binding to the cell membrane and gathering the viral RNA into a nucleocapsid that forms the core of a mature virus particle. During virus entry, may induce genome penetration into the host cytoplasm after hemifusion induced by the surface proteins. Can migrate to the cell nucleus where it modulates host functions. In terms of biological role, prevents premature fusion activity of envelope proteins in trans-Golgi by binding to envelope protein E at pH6.0. After virion release in extracellular space, gets dissociated from E dimers. Functionally, acts as a chaperone for envelope protein E during intracellular virion assembly by masking and inactivating envelope protein E fusion peptide. prM is the only viral peptide matured by host furin in the trans-Golgi network probably to avoid catastrophic activation of the viral fusion activity in acidic Golgi compartment prior to virion release. prM-E cleavage is inefficient, and many virions are only partially matured. These uncleaved prM would play a role in immune evasion. Its function is as follows. May play a role in virus budding. Exerts cytotoxic effects by activating a mitochondrial apoptotic pathway through M ectodomain. May display a viroporin activity. Binds to host cell surface receptor and mediates fusion between viral and cellular membranes. Envelope protein is synthesized in the endoplasmic reticulum in the form of heterodimer with protein prM. They play a role in virion budding in the ER, and the newly formed immature particle is covered with 60 spikes composed of heterodimer between precursor prM and envelope protein E. The virion is transported to the Golgi apparatus where the low pH causes dissociation of PrM-E heterodimers and formation of E homodimers. prM-E cleavage is inefficient, and many virions are only partially matured. These uncleaved prM would play a role in immune evasion. In terms of biological role, involved in immune evasion, pathogenesis and viral replication. Once cleaved off the polyprotein, is targeted to three destinations: the viral replication cycle, the plasma membrane and the extracellular compartment. May play a role in viral genome replication. Assist membrane bending and envelopment of genomic RNA at the endoplasmic reticulum. Excreted as a hexameric lipoparticle that plays a role against host immune response. Functionally, component of the viral RNA replication complex that functions in virion assembly and antagonizes the host immune response. Its function is as follows. Required cofactor for the serine protease function of NS3. May have membrane-destabilizing activity and form viroporins. Displays three enzymatic activities: serine protease, NTPase and RNA helicase. NS3 serine protease, in association with NS2B, performs its autocleavage and cleaves the polyprotein at dibasic sites in the cytoplasm: C-prM, NS2A-NS2B, NS2B-NS3, NS3-NS4A, NS4A-2K and NS4B-NS5. NS3 RNA helicase binds RNA and unwinds dsRNA in the 3' to 5' direction. In terms of biological role, regulates the ATPase activity of the NS3 helicase activity. NS4A allows NS3 helicase to conserve energy during unwinding. Functionally, functions as a signal peptide for NS4B and is required for the interferon antagonism activity of the latter. Its function is as follows. Inhibits interferon (IFN)-induced host STAT1 phosphorylation and nuclear translocation, thereby preventing the establishment of a cellular antiviral state by blocking the IFN-alpha/beta pathway. Replicates the viral (+) and (-) RNA genome, and performs the capping of genomes in the cytoplasm. NS5 methylates viral RNA cap at guanine N-7 and ribose 2'-O positions. Besides its role in RNA genome replication, also prevents the establishment of cellular antiviral state by blocking the interferon-alpha/beta (IFN-alpha/beta) signaling pathway. Inhibits host TYK2 and STAT2 phosphorylation, thereby preventing activation of JAK-STAT signaling pathway. This chain is Genome polyprotein, found in Aedes (CFA flavivirus).